The following is a 424-amino-acid chain: Protein TUNICAMYCIN INDUCED 1 (424 aa).

An N-terminal signal peptide occupies residues 1–25 (MGHRVLVYVGALFLILFTIFPSSSA). Asparagine 197, asparagine 296, and asparagine 406 each carry an N-linked (GlcNAc...) asparagine glycan.

In terms of tissue distribution, restricted to pollen grains at high levels.

It is found in the endoplasmic reticulum. Its function is as follows. Involved in the regulation of pollen surface morphology, probably by modulating the secretion of proteins and/or lipids during pollen development. The chain is Protein TUNICAMYCIN INDUCED 1 from Arabidopsis thaliana (Mouse-ear cress).